The sequence spans 64 residues: Small ribosomal subunit protein bS21 (64 aa).

The protein belongs to the bacterial ribosomal protein bS21 family.

In Anaeromyxobacter dehalogenans (strain 2CP-1 / ATCC BAA-258), this protein is Small ribosomal subunit protein bS21.